The following is a 513-amino-acid chain: Anthranilate synthase component 1 (513 aa).

L-tryptophan-binding positions include S50 and 279–281; that span reads PYM. Position 314-315 (314-315) interacts with chorismate; that stretch reads GT. E341 lines the Mg(2+) pocket. Chorismate contacts are provided by residues Y429, R449, 463-465, and G465; that span reads GAG. E478 is a Mg(2+) binding site.

Belongs to the anthranilate synthase component I family. In terms of assembly, heterotetramer consisting of two non-identical subunits: a beta subunit (TrpG) and a large alpha subunit (TrpE). Mg(2+) is required as a cofactor.

It catalyses the reaction chorismate + L-glutamine = anthranilate + pyruvate + L-glutamate + H(+). It participates in amino-acid biosynthesis; L-tryptophan biosynthesis; L-tryptophan from chorismate: step 1/5. With respect to regulation, feedback inhibited by tryptophan. Its function is as follows. Part of a heterotetrameric complex that catalyzes the two-step biosynthesis of anthranilate, an intermediate in the biosynthesis of L-tryptophan. In the first step, the glutamine-binding beta subunit (TrpG) of anthranilate synthase (AS) provides the glutamine amidotransferase activity which generates ammonia as a substrate that, along with chorismate, is used in the second step, catalyzed by the large alpha subunit of AS (TrpE) to produce anthranilate. In the absence of TrpG, TrpE can synthesize anthranilate directly from chorismate and high concentrations of ammonia. The chain is Anthranilate synthase component 1 (trpE) from Bacillus pumilus (Bacillus mesentericus).